The sequence spans 607 residues: Protein NRT1/ PTR FAMILY 1.2 (607 aa).

Helical transmembrane passes span 65-85 (TNVL…GAFL), 96-116 (ISIA…TAML), 138-158 (ASQL…SGGI), 185-205 (FFGW…TGIV), 215-235 (IGFG…ILAS), 374-394 (VPAG…VILY), 418-438 (MGLG…VESF), 460-480 (AMWL…TAIG), 496-516 (IAAS…SVVL), and 544-564 (YYWV…ICSW). Phosphoserine is present on S601.

Belongs to the major facilitator superfamily. Proton-dependent oligopeptide transporter (POT/PTR) (TC 2.A.17) family. As to expression, expressed in shoots, stems, leaves, flowers and siliques. Mainly detected in larger expanded leaves, in the companion cells of major veins.

It localises to the cell membrane. Functionally, low-affinity nitrate transporter involved in xylem-to-phloem transfer for redistributing nitrate into developing leaves. Not involved in dipeptides transport. This chain is Protein NRT1/ PTR FAMILY 1.2 (NPF1.2), found in Arabidopsis thaliana (Mouse-ear cress).